The sequence spans 1088 residues: Protein unc-13 homolog D (1088 aa).

Residues Val-26–His-46 form a disordered region. The C2 1 domain maps to Gln-92–Gln-239. Ca(2+)-binding residues include Asp-127 and Asp-133. Ser-150 carries the post-translational modification Phosphoserine. Residues Asp-206 and Asp-208 each contribute to the Ca(2+) site. The interval Asp-240–Ala-543 is interaction with RAB27A. The region spanning Phe-557–Ile-675 is the MHD1 domain. An MHD2 domain is found at Glu-786 to Tyr-893. Positions Arg-908 to Gly-1033 constitute a C2 2 domain. Ca(2+)-binding residues include Leu-938, Asp-939, Asp-945, Asp-1003, Asp-1005, and Asp-1011.

It belongs to the unc-13 family. As to quaternary structure, interacts with RAB27A and DOC2A. Interacts with RhoG; the interaction increases RhoG affinity to the membrane lipids, targets Unc13d to membrane lipids and facilitates cytotoxic granule (CG) docking to the plasma membrane. It depends on Ca(2+) as a cofactor. Expressed in lung bronchial epithelium goblet/mucous cells. Also expressed in spleen and testis. Expressed at very low levels in heart muscle, kidney, liver, brain and skeletal muscle.

Its subcellular location is the cytoplasm. It localises to the membrane. The protein localises to the late endosome. It is found in the recycling endosome. The protein resides in the lysosome. Plays a role in cytotoxic granule exocytosis in lymphocytes. Required for both granule maturation and granule docking and priming at the immunologic synapse. Regulates assembly of recycling and late endosomal structures, leading to the formation of an endosomal exocytic compartment that fuses with perforin-containing granules at the immunologic synapse and licences them for exocytosis. Regulates Ca(2+)-dependent secretory lysosome exocytosis in mast cells. The chain is Protein unc-13 homolog D (Unc13d) from Rattus norvegicus (Rat).